The following is a 428-amino-acid chain: Dihydroorotase (428 aa).

2 residues coordinate Zn(2+): His60 and His62. Substrate contacts are provided by residues 62–64 (HLR) and Asn94. Zn(2+) contacts are provided by Asp152, His179, and His232. Asn278 provides a ligand contact to substrate. Asp305 contributes to the Zn(2+) binding site. Asp305 is a catalytic residue. Substrate-binding positions include His309 and 323-324 (FG).

Belongs to the metallo-dependent hydrolases superfamily. DHOase family. Class I DHOase subfamily. The cofactor is Zn(2+).

It catalyses the reaction (S)-dihydroorotate + H2O = N-carbamoyl-L-aspartate + H(+). The protein operates within pyrimidine metabolism; UMP biosynthesis via de novo pathway; (S)-dihydroorotate from bicarbonate: step 3/3. Catalyzes the reversible cyclization of carbamoyl aspartate to dihydroorotate. The sequence is that of Dihydroorotase from Anoxybacillus flavithermus (strain DSM 21510 / WK1).